A 280-amino-acid polypeptide reads, in one-letter code: Large ribosomal subunit protein uL2cz/uL2cy (280 aa).

2 disordered regions span residues 1–25 (MAIH…VKSN) and 231–280 (PVDH…RRTK).

This sequence belongs to the universal ribosomal protein uL2 family. In terms of assembly, part of the 50S ribosomal subunit.

It is found in the plastid. The protein localises to the chloroplast. This chain is Large ribosomal subunit protein uL2cz/uL2cy (rpl2-A), found in Platanus occidentalis (Sycamore).